The chain runs to 604 residues: Cytosolic Fe-S cluster assembly factor nar1 (604 aa).

Positions 20, 62, 65, 68, 215, and 270 each coordinate [4Fe-4S] cluster. A disordered region spans residues 434 to 461 (LPGAKPAVRPAAGRRQPMSRNAVSTGSS). The span at 451 to 461 (MSRNAVSTGSS) shows a compositional bias: polar residues. [4Fe-4S] cluster is bound by residues cysteine 473 and cysteine 477.

The protein belongs to the NARF family.

In terms of biological role, component of the cytosolic Fe/S protein assembly machinery. Required for maturation of extramitochondrial Fe/S proteins. May play a role in the transfer of pre-assembled Fe/S clusters to target apoproteins. This chain is Cytosolic Fe-S cluster assembly factor nar1 (nar1), found in Penicillium rubens (strain ATCC 28089 / DSM 1075 / NRRL 1951 / Wisconsin 54-1255) (Penicillium chrysogenum).